The following is a 259-amino-acid chain: Imidazole glycerol phosphate synthase subunit HisF (259 aa).

Catalysis depends on residues aspartate 11 and aspartate 130.

Belongs to the HisA/HisF family. As to quaternary structure, heterodimer of HisH and HisF.

The protein resides in the cytoplasm. It catalyses the reaction 5-[(5-phospho-1-deoxy-D-ribulos-1-ylimino)methylamino]-1-(5-phospho-beta-D-ribosyl)imidazole-4-carboxamide + L-glutamine = D-erythro-1-(imidazol-4-yl)glycerol 3-phosphate + 5-amino-1-(5-phospho-beta-D-ribosyl)imidazole-4-carboxamide + L-glutamate + H(+). It participates in amino-acid biosynthesis; L-histidine biosynthesis; L-histidine from 5-phospho-alpha-D-ribose 1-diphosphate: step 5/9. In terms of biological role, IGPS catalyzes the conversion of PRFAR and glutamine to IGP, AICAR and glutamate. The HisF subunit catalyzes the cyclization activity that produces IGP and AICAR from PRFAR using the ammonia provided by the HisH subunit. The chain is Imidazole glycerol phosphate synthase subunit HisF from Solidesulfovibrio magneticus (strain ATCC 700980 / DSM 13731 / RS-1) (Desulfovibrio magneticus).